We begin with the raw amino-acid sequence, 204 residues long: N-(5'-phosphoribosyl)anthranilate isomerase (204 aa).

This sequence belongs to the TrpF family.

It carries out the reaction N-(5-phospho-beta-D-ribosyl)anthranilate = 1-(2-carboxyphenylamino)-1-deoxy-D-ribulose 5-phosphate. It functions in the pathway amino-acid biosynthesis; L-tryptophan biosynthesis; L-tryptophan from chorismate: step 3/5. This is N-(5'-phosphoribosyl)anthranilate isomerase from Bacillus cereus (strain AH820).